The primary structure comprises 351 residues: Protein Wnt-8b (351 aa).

The first 22 residues, 1 to 22 (MFLSKPSVYICLFTCVLQLSHS), serve as a signal peptide directing secretion. A disulfide bridge links cysteine 54 with cysteine 65. N-linked (GlcNAc...) asparagine glycosylation is present at asparagine 103. Intrachain disulfides connect cysteine 104/cysteine 112, cysteine 114/cysteine 132, cysteine 180/cysteine 194, cysteine 182/cysteine 189, cysteine 256/cysteine 294, cysteine 272/cysteine 287, cysteine 291/cysteine 333, cysteine 309/cysteine 324, cysteine 311/cysteine 321, and cysteine 316/cysteine 317. Serine 186 carries the O-palmitoleoyl serine lipid modification. N-linked (GlcNAc...) asparagine glycosylation occurs at asparagine 259.

Belongs to the Wnt family. Post-translationally, palmitoleoylation is required for efficient binding to frizzled receptors. Depalmitoleoylation leads to Wnt signaling pathway inhibition. Proteolytic processing by TIKI1 and TIKI2 promotes oxidation and formation of large disulfide-bond oligomers, leading to inactivation of WNT8B. As to expression, expression is restricted to the brain, and more specifically to the forebrain.

It is found in the secreted. Its subcellular location is the extracellular space. The protein localises to the extracellular matrix. Its function is as follows. Ligand for members of the frizzled family of seven transmembrane receptors. May play an important role in the development and differentiation of certain forebrain structures, notably the hippocampus. This is Protein Wnt-8b (WNT8B) from Homo sapiens (Human).